We begin with the raw amino-acid sequence, 80 residues long: RNA-binding protein Hfq (80 aa).

One can recognise a Sm domain in the interval D10–M70.

It belongs to the Hfq family. As to quaternary structure, homohexamer.

Functionally, RNA chaperone that binds small regulatory RNA (sRNAs) and mRNAs to facilitate mRNA translational regulation in response to envelope stress, environmental stress and changes in metabolite concentrations. Also binds with high specificity to tRNAs. In Rhizobium rhizogenes (strain K84 / ATCC BAA-868) (Agrobacterium radiobacter), this protein is RNA-binding protein Hfq.